The sequence spans 327 residues: G protein pathway suppressor 2 (327 aa).

Positions 14 to 109 (MARALHRHIM…RRRKEQSDLT (96 aa)) form a coiled coil. Positions 26 to 65 (RERKRQEEEEVDKMMEQKMKEEQERRKKKEMEERMSLEET) are disordered. Residues Lys-45 and Lys-71 each participate in a glycyl lysine isopeptide (Lys-Gly) (interchain with G-Cter in SUMO1) cross-link. The interval 61–94 (SLEETKEQILKLQEKLSALQEEKHQLFLQLKKVL) is interaction with SUMO. Disordered regions lie at residues 178-208 (GQFQGSPGGAYGTAQPPPHYGPTQPAYSPSQ), 253-285 (QKQMEHANQQTSFSDSSSLRPMHPQALHPAPGL), and 300-327 (KSGFATTSQPGPRLPFIQHSQNPRFYHK). Over residues 253–271 (QKQMEHANQQTSFSDSSSL) the composition is skewed to polar residues. Position 312 is an asymmetric dimethylarginine (Arg-312). Residues 317–327 (QHSQNPRFYHK) show a composition bias toward polar residues. Arg-323 is modified (asymmetric dimethylarginine; alternate). Arg-323 is modified (omega-N-methylarginine; alternate).

In terms of assembly, component of the N-Cor repressor complex, at least composed of NCOR1, NCOR2, HDAC3, TBL1X, TBL1R, CORO2A and GPS2. Interacts (when sumoylated at Lys-71) with TBL1X; leading to protect GPS2 from degradation by the proteasome. Interacts with UBE2N; leading to inhibit UBE2N/Ubc13 activity. Interacts with TRAF1. Interacts with TRAF2. Interacts with TRAF6. Interacts with PPARG (when in the liganded conformation). Interacts with (sumoylated) NR1H2; interaction with sumoylated NR1H2 and NR5A2 onto hepatic acute phase protein promoters prevents N-Cor corepressor complex dissociation. Interacts with (sumoylated) NR5A2; interaction with sumoylated NR1H2 and NR5A2 onto hepatic acute phase protein promoters prevents N-Cor corepressor complex dissociation. Interacts with NR1H3. Interacts with RFX4. Interacts with ANKRD26. In terms of processing, sumoylation regulates its subcellular location. Sumoylation at Lys-45 and Lys-71 regulates the shuttling between the cytoplasm and the nucleus. Sumoylation at Lys-71 is required for interaction with TBL1X. Sumoylated at Lys-45 and Lys-71 in mitochondrion. Desumoylation by SENP1 leads to relocation from the mitochondria to the nucleus. Post-translationally, ubiquitinated at the C-terminus by SIAH2; leading to its degradation by the proteasome. Interaction with TBL1X and methylation at Arg-323 protect GPS2 against ubiquitination and degradation. Methylated at Arg-312 and Arg-323 by PRMT6. Methylation at Arg-323 protects from degradation by the proteasome.

The protein localises to the nucleus. The protein resides in the mitochondrion. It is found in the cytoplasm. It localises to the cytosol. Its function is as follows. Key regulator of inflammation, lipid metabolism and mitochondrion homeostasis that acts by inhibiting the activity of the ubiquitin-conjugating enzyme UBE2N/Ubc13, thereby inhibiting 'Lys-63'-linked ubiquitination. In the nucleus, can both acts as a corepressor and coactivator of transcription, depending on the context. Acts as a transcription coactivator in adipocytes by promoting the recruitment of PPARG to promoters: acts by inhibiting the activity of the ubiquitin-conjugating enzyme UBE2N/Ubc13, leading to stabilization of KDM4A and subsequent histone H3 'Lys-9' (H3K9) demethylation. Promotes cholesterol efflux by acting as a transcription coactivator. Acts as a regulator of B-cell development by inhibiting UBE2N/Ubc13, thereby restricting the activation of Toll-like receptors (TLRs) and B-cell antigen receptors (BCRs) signaling pathways. Acts as a key mediator of mitochondrial stress response: in response to mitochondrial depolarization, relocates from the mitochondria to the nucleus following desumoylation and specifically promotes expression of nuclear-encoded mitochondrial genes. Promotes transcription of nuclear-encoded mitochondrial genes by inhibiting UBE2N/Ubc13. Can also act as a corepressor as part of the N-Cor repressor complex by repressing active PPARG. Plays an anti-inflammatory role in macrophages and is required for insulin sensitivity by acting as a corepressor. Plays an anti-inflammatory role during the hepatic acute phase response by interacting with sumoylated NR1H2 and NR5A2 proteins, thereby preventing N-Cor corepressor complex dissociation. In the cytosol, also plays a non-transcriptional role by regulating insulin signaling and pro-inflammatory pathways. In the cytoplasm, acts as a negative regulator of inflammation by inhibiting the pro-inflammatory TNF-alpha pathway; acts by repressing UBE2N/Ubc13 activity. In the cytoplasm of adipocytes, restricts the activation of insulin signaling via inhibition of UBE2N/Ubc13-mediated ubiquitination of AKT. Able to suppress G-protein- and mitogen-activated protein kinase-mediated signal transduction. The sequence is that of G protein pathway suppressor 2 from Mus musculus (Mouse).